A 262-amino-acid polypeptide reads, in one-letter code: 14-3-3-like protein GF14-E (262 aa).

The protein belongs to the 14-3-3 family. Ubiquitous.

It is found in the cytoplasm. The protein localises to the nucleus. Is associated with a DNA binding complex that binds to the G box, a well-characterized cis-acting DNA regulatory element found in plant genes. The sequence is that of 14-3-3-like protein GF14-E (GF14E) from Oryza sativa subsp. japonica (Rice).